The chain runs to 186 residues: Probable nicotinate-nucleotide adenylyltransferase (186 aa).

Belongs to the NadD family.

It catalyses the reaction nicotinate beta-D-ribonucleotide + ATP + H(+) = deamido-NAD(+) + diphosphate. It functions in the pathway cofactor biosynthesis; NAD(+) biosynthesis; deamido-NAD(+) from nicotinate D-ribonucleotide: step 1/1. In terms of biological role, catalyzes the reversible adenylation of nicotinate mononucleotide (NaMN) to nicotinic acid adenine dinucleotide (NaAD). This is Probable nicotinate-nucleotide adenylyltransferase from Tropheryma whipplei (strain Twist) (Whipple's bacillus).